The sequence spans 393 residues: CCA-adding enzyme (393 aa).

Positions 27 and 30 each coordinate ATP. 2 residues coordinate CTP: Gly27 and Arg30. Mg(2+) contacts are provided by Asp40 and Asp42. The ATP site is built by Arg111, Asp154, Arg157, Arg160, and Arg163. CTP-binding residues include Arg111, Asp154, Arg157, Arg160, and Arg163.

It belongs to the tRNA nucleotidyltransferase/poly(A) polymerase family. Bacterial CCA-adding enzyme type 3 subfamily. As to quaternary structure, homodimer. Mg(2+) serves as cofactor.

It catalyses the reaction a tRNA precursor + 2 CTP + ATP = a tRNA with a 3' CCA end + 3 diphosphate. The catalysed reaction is a tRNA with a 3' CCA end + 2 CTP + ATP = a tRNA with a 3' CCACCA end + 3 diphosphate. Its function is as follows. Catalyzes the addition and repair of the essential 3'-terminal CCA sequence in tRNAs without using a nucleic acid template. Adds these three nucleotides in the order of C, C, and A to the tRNA nucleotide-73, using CTP and ATP as substrates and producing inorganic pyrophosphate. tRNA 3'-terminal CCA addition is required both for tRNA processing and repair. Also involved in tRNA surveillance by mediating tandem CCA addition to generate a CCACCA at the 3' terminus of unstable tRNAs. While stable tRNAs receive only 3'-terminal CCA, unstable tRNAs are marked with CCACCA and rapidly degraded. This chain is CCA-adding enzyme, found in Listeria monocytogenes serotype 4b (strain CLIP80459).